The primary structure comprises 288 residues: ATP synthase gamma chain (288 aa).

Belongs to the ATPase gamma chain family. F-type ATPases have 2 components, CF(1) - the catalytic core - and CF(0) - the membrane proton channel. CF(1) has five subunits: alpha(3), beta(3), gamma(1), delta(1), epsilon(1). CF(0) has three main subunits: a, b and c.

The protein resides in the cell inner membrane. Functionally, produces ATP from ADP in the presence of a proton gradient across the membrane. The gamma chain is believed to be important in regulating ATPase activity and the flow of protons through the CF(0) complex. This Rickettsia typhi (strain ATCC VR-144 / Wilmington) protein is ATP synthase gamma chain.